The following is a 324-amino-acid chain: Annexin A10 (324 aa).

4 Annexin repeats span residues 17–88 (FNPM…GLMY), 89–160 (PPPS…NLVQ), 171–243 (AMAA…AIVR), and 247–318 (DKPS…AICA).

It belongs to the annexin family.

In Mus musculus (Mouse), this protein is Annexin A10 (Anxa10).